The primary structure comprises 297 residues: 4-hydroxy-tetrahydrodipicolinate synthase (297 aa).

Position 47 (T47) interacts with pyruvate. Y136 acts as the Proton donor/acceptor in catalysis. The active-site Schiff-base intermediate with substrate is the K165. A pyruvate-binding site is contributed by I206.

It belongs to the DapA family. In terms of assembly, homotetramer; dimer of dimers.

The protein resides in the cytoplasm. It catalyses the reaction L-aspartate 4-semialdehyde + pyruvate = (2S,4S)-4-hydroxy-2,3,4,5-tetrahydrodipicolinate + H2O + H(+). It functions in the pathway amino-acid biosynthesis; L-lysine biosynthesis via DAP pathway; (S)-tetrahydrodipicolinate from L-aspartate: step 3/4. Catalyzes the condensation of (S)-aspartate-beta-semialdehyde [(S)-ASA] and pyruvate to 4-hydroxy-tetrahydrodipicolinate (HTPA). This is 4-hydroxy-tetrahydrodipicolinate synthase from Campylobacter fetus subsp. fetus (strain 82-40).